Here is a 940-residue protein sequence, read N- to C-terminus: Phosphoenolpyruvate carboxylase (940 aa).

Active-site residues include H138 and K603.

Belongs to the PEPCase type 1 family. Mg(2+) serves as cofactor.

It catalyses the reaction oxaloacetate + phosphate = phosphoenolpyruvate + hydrogencarbonate. Its function is as follows. Forms oxaloacetate, a four-carbon dicarboxylic acid source for the tricarboxylic acid cycle. The polypeptide is Phosphoenolpyruvate carboxylase (Streptococcus thermophilus (strain ATCC BAA-491 / LMD-9)).